The primary structure comprises 662 residues: UvrABC system protein B (662 aa).

The 158-residue stretch at 31-188 folds into the Helicase ATP-binding domain; the sequence is DNIEGGEKAQ…NDLVDIQFER (158 aa). 44 to 51 is a binding site for ATP; sequence GATGTGKT. The Beta-hairpin signature appears at 97 to 120; sequence YYDYYQPEAYVPSSDTYIEKDSSV. One can recognise a Helicase C-terminal domain in the interval 435–601; sequence QIDDLLGEIN…TIKKEIRDLI (167 aa). The 36-residue stretch at 626–661 folds into the UVR domain; sequence KELVKKLEKQMQEAVEVLDFELAAQIRDMMLEVKAL.

It belongs to the UvrB family. As to quaternary structure, forms a heterotetramer with UvrA during the search for lesions. Interacts with UvrC in an incision complex.

It is found in the cytoplasm. Functionally, the UvrABC repair system catalyzes the recognition and processing of DNA lesions. A damage recognition complex composed of 2 UvrA and 2 UvrB subunits scans DNA for abnormalities. Upon binding of the UvrA(2)B(2) complex to a putative damaged site, the DNA wraps around one UvrB monomer. DNA wrap is dependent on ATP binding by UvrB and probably causes local melting of the DNA helix, facilitating insertion of UvrB beta-hairpin between the DNA strands. Then UvrB probes one DNA strand for the presence of a lesion. If a lesion is found the UvrA subunits dissociate and the UvrB-DNA preincision complex is formed. This complex is subsequently bound by UvrC and the second UvrB is released. If no lesion is found, the DNA wraps around the other UvrB subunit that will check the other stand for damage. The sequence is that of UvrABC system protein B from Streptococcus pneumoniae (strain Taiwan19F-14).